We begin with the raw amino-acid sequence, 84 residues long: Small ribosomal subunit protein uS17 (84 aa).

It belongs to the universal ribosomal protein uS17 family. Part of the 30S ribosomal subunit.

Functionally, one of the primary rRNA binding proteins, it binds specifically to the 5'-end of 16S ribosomal RNA. The protein is Small ribosomal subunit protein uS17 of Clostridium botulinum (strain ATCC 19397 / Type A).